The chain runs to 183 residues: uncharacterized protein (183 aa).

The Macro domain occupies 1-182 (MIKVVKGDIT…KALKIVGQGG (182 aa)).

This is an uncharacterized protein from Pyrococcus furiosus (strain ATCC 43587 / DSM 3638 / JCM 8422 / Vc1).